We begin with the raw amino-acid sequence, 250 residues long: MTFTVIIPARFASSRLPGKPLADINGKPMVVHVMERAQESGAQRVIVATDHPDVEVAVRQAGGEVCLTRADHNSGTERLAEVIERYGFTDDDIIVNVQGDEPLIPSVIIRQVAENLAASKAGMATLAVPIETSEEAFNPNAVKVVTDAEGYALYFSRATIPWDRERFAQSKETIGDHFLRHIGIYAYRAGFVRRYVTWAPSQLEQIELLEQLRVLWYGEKIHVAVAKAVPSVGVDTPEDLARVRQVMAGQ.

This sequence belongs to the KdsB family.

Its subcellular location is the cytoplasm. It carries out the reaction 3-deoxy-alpha-D-manno-oct-2-ulosonate + CTP = CMP-3-deoxy-beta-D-manno-octulosonate + diphosphate. It functions in the pathway nucleotide-sugar biosynthesis; CMP-3-deoxy-D-manno-octulosonate biosynthesis; CMP-3-deoxy-D-manno-octulosonate from 3-deoxy-D-manno-octulosonate and CTP: step 1/1. It participates in bacterial outer membrane biogenesis; lipopolysaccharide biosynthesis. Its function is as follows. Activates KDO (a required 8-carbon sugar) for incorporation into bacterial lipopolysaccharide in Gram-negative bacteria. The sequence is that of 3-deoxy-manno-octulosonate cytidylyltransferase from Pectobacterium atrosepticum (strain SCRI 1043 / ATCC BAA-672) (Erwinia carotovora subsp. atroseptica).